A 99-amino-acid chain; its full sequence is Acylphosphatase-1 (99 aa).

A2 bears the N-acetylalanine mark. The Acylphosphatase-like domain maps to 9-99 (SVDYEVSGRV…LEHTDFQIRK (91 aa)). Residues R24 and N42 contribute to the active site.

The protein belongs to the acylphosphatase family. As to expression, organ-common type isozyme is found in many different tissues.

It catalyses the reaction an acyl phosphate + H2O = a carboxylate + phosphate + H(+). This Gallus gallus (Chicken) protein is Acylphosphatase-1 (ACYP1).